The chain runs to 477 residues: Interferon gamma receptor 1 (477 aa).

The first 25 residues, 1 to 25 (MGPQAAAGRMILLVVLMLSAKVGSG), serve as a signal peptide directing secretion. Residues 26-254 (ALTSTEDPEP…PPFHDDRKDS (229 aa)) are Extracellular-facing. Asparagine 61 and asparagine 85 each carry an N-linked (GlcNAc...) asparagine glycan. 4 disulfide bridges follow: cysteine 83–cysteine 91, cysteine 128–cysteine 174, cysteine 203–cysteine 208, and cysteine 222–cysteine 243. The helical transmembrane segment at 255–275 (IWILVVAPLTVFTVVILVFAY) threads the bilayer. The Cytoplasmic portion of the chain corresponds to 276 to 477 (WYTKKNSFKR…RLTGEAQELS (202 aa)). 2 disordered regions span residues 335 to 386 (TVTA…LSSN) and 402 to 446 (SDSG…SGYD). Serine 362 carries the phosphoserine modification. A Phosphothreonine modification is found at threonine 367. Serine 370 bears the Phosphoserine mark. 2 positions are modified to phosphothreonine: threonine 373 and threonine 375. Polar residues predominate over residues 375–386 (TQRRSFSLLSSN). A phosphoserine mark is found at serine 379 and serine 402. Residues 402-416 (SDSGLVGSGSSISDL) show a composition bias toward low complexity. Tyrosine 445 bears the Phosphotyrosine mark.

Belongs to the type II cytokine receptor family. In terms of assembly, monomer. Heterodimer with IFNGR2, to form the IFNG receptor complex. Interacts with JAK1. Interacts (when phosphorylated) with STAT1. Interacts with SOCS1. Post-translationally, phosphorylated at Ser/Thr residues. Phosphorylation of Tyr-445 is required for IFNG receptor signal transduction. Influenza virus infection leads to phosphorylation in a CSNK1A1-dependent manner. In terms of processing, ubiquitinated after phosphorylation in a CSNK1A1-dependent manner, leading to the lysosome-dependent degradation. Proteasomally degraded through 'Lys-48'-mediated ubiquitination. Ubiquitination is necessary for efficient IFNGR1 signaling.

The protein localises to the cell membrane. Functionally, receptor subunit for interferon gamma/INFG that plays crucial roles in antimicrobial, antiviral, and antitumor responses by activating effector immune cells and enhancing antigen presentation (, PubMed:20926559, PubMed:27286456). Associates with transmembrane accessory factor IFNGR2 to form a functional receptor. Upon ligand binding, the intracellular domain of IFNGR1 opens out to allow association of downstream signaling components JAK1 and JAK2. In turn, activated JAK1 phosphorylates IFNGR1 to form a docking site for STAT1. Subsequent phosphorylation of STAT1 leads to its dimerization, translocation to the nucleus, and stimulation of target gene transcription. STAT3 can also be activated in a similar manner although activation seems weaker. IFNGR1 intracellular domain phosphorylation also provides a docking site for SOCS1 that regulates the JAK-STAT pathway by competing with STAT1 binding to IFNGR1. This is Interferon gamma receptor 1 from Mus musculus (Mouse).